The sequence spans 606 residues: NADH-ubiquinone oxidoreductase chain 5 (606 aa).

15 helical membrane-spanning segments follow: residues 1 to 21, 43 to 63, 87 to 107, 117 to 137, 140 to 160, 171 to 191, 201 to 221, 241 to 261, 273 to 293, 310 to 330, 365 to 385, 409 to 429, 457 to 477, 488 to 508, and 582 to 602; these read MNMF…PIIM, AFMI…ETIF, MIFV…SMWY, FFKY…ANNM, LFIG…WWYG, AVLY…WFLL, IFIT…LAAT, TPVS…FLLI, IQTL…ICAL, LGLM…LHIC, VLPF…GMPF, LLIT…IMFF, LLIG…PTTI, MTAL…NLTT, and GLIK…LLIL.

The protein belongs to the complex I subunit 5 family. Core subunit of respiratory chain NADH dehydrogenase (Complex I) which is composed of 45 different subunits.

It is found in the mitochondrion inner membrane. It carries out the reaction a ubiquinone + NADH + 5 H(+)(in) = a ubiquinol + NAD(+) + 4 H(+)(out). Functionally, core subunit of the mitochondrial membrane respiratory chain NADH dehydrogenase (Complex I) which catalyzes electron transfer from NADH through the respiratory chain, using ubiquinone as an electron acceptor. Essential for the catalytic activity and assembly of complex I. The chain is NADH-ubiquinone oxidoreductase chain 5 (MT-ND5) from Canis lupus familiaris (Dog).